We begin with the raw amino-acid sequence, 503 residues long: Activin receptor type-1-like (503 aa).

A signal peptide spans 1-21 (MTLGSPRRGLLMLLMALVTQG). Residues 22-118 (DPVKPSRGPL…PSEQPGTDGQ (97 aa)) lie on the Extracellular side of the membrane. 3 disulfides stabilise this stretch: Cys34-Cys51, Cys36-Cys41, and Cys46-Cys69. The interval 73-76 (HREL) is mediates specificity for BMP ligand. Cystine bridges form between Cys77/Cys89 and Cys90/Cys95. An N-linked (GlcNAc...) asparagine glycan is attached at Asn98. A helical membrane pass occupies residues 119–141 (LALILGPVLALLALVALGVLGLW). Topologically, residues 142–503 (HVRRRQEKQR…NSPEKPKVIQ (362 aa)) are cytoplasmic. A phosphoserine mark is found at Ser155, Ser160, and Ser161. The GS domain maps to 172–201 (SMLGDLLDSDCTTGSGSGLPFLVQRTVARQ). In terms of domain architecture, Protein kinase spans 202 to 492 (VALVECVGKG…LRIKKTLQKI (291 aa)). ATP is bound by residues 208 to 216 (VGKGRYGEV) and Lys229. Asp330 functions as the Proton acceptor in the catalytic mechanism.

The protein belongs to the protein kinase superfamily. TKL Ser/Thr protein kinase family. TGFB receptor subfamily. In terms of assembly, interacts with TSC22D1/TSC-22. It depends on Mg(2+) as a cofactor. Requires Mn(2+) as cofactor.

Its subcellular location is the cell membrane. The enzyme catalyses L-threonyl-[receptor-protein] + ATP = O-phospho-L-threonyl-[receptor-protein] + ADP + H(+). It catalyses the reaction L-seryl-[receptor-protein] + ATP = O-phospho-L-seryl-[receptor-protein] + ADP + H(+). Its function is as follows. Type I receptor for TGF-beta family ligands BMP9/GDF2 and BMP10 and important regulator of normal blood vessel development. On ligand binding, forms a receptor complex consisting of two type II and two type I transmembrane serine/threonine kinases. Type II receptors phosphorylate and activate type I receptors which autophosphorylate, then bind and activate SMAD transcriptional regulators. May bind activin as well. This chain is Activin receptor type-1-like (ACVRL1), found in Pongo abelii (Sumatran orangutan).